Consider the following 88-residue polypeptide: MGTARFLSAVLLLSVLLMVTFPALLSAEYHDGRVDICSLPSDSGDCLRFFEMWYFDGTTCTKFVYGGYGGNDNRFPTEKACMKRCAKA.

The signal sequence occupies residues 1 to 27 (MGTARFLSAVLLLSVLLMVTFPALLSA). Residues 28–33 (EYHDGR) constitute a propeptide that is removed on maturation. The region spanning 37–85 (CSLPSDSGDCLRFFEMWYFDGTTCTKFVYGGYGGNDNRFPTEKACMKRC) is the BPTI/Kunitz inhibitor domain. Cystine bridges form between cysteine 37-cysteine 85 and cysteine 60-cysteine 81.

It belongs to the venom Kunitz-type family. 03 (sub-Kunitz) subfamily. As to expression, expressed by the venom gland.

It localises to the secreted. Its function is as follows. Serine protease inhibitor that inhibits trypsin at a molar ratio of 1:1. The protein is Kunitz-type U15-theraphotoxin-Hs1a of Cyriopagopus schmidti (Chinese bird spider).